The following is a 402-amino-acid chain: 8-amino-7-oxononanoate synthase (402 aa).

Substrate is bound at residue arginine 26. Position 114 to 115 (114 to 115 (GY)) interacts with pyridoxal 5'-phosphate. Position 139 (histidine 139) interacts with substrate. 3 residues coordinate pyridoxal 5'-phosphate: serine 182, histidine 210, and threonine 239. An N6-(pyridoxal phosphate)lysine modification is found at lysine 242. Position 359 (threonine 359) interacts with substrate.

This sequence belongs to the class-II pyridoxal-phosphate-dependent aminotransferase family. BioF subfamily. As to quaternary structure, homodimer. Pyridoxal 5'-phosphate serves as cofactor.

It carries out the reaction 6-carboxyhexanoyl-[ACP] + L-alanine + H(+) = (8S)-8-amino-7-oxononanoate + holo-[ACP] + CO2. Its pathway is cofactor biosynthesis; biotin biosynthesis. Its function is as follows. Catalyzes the decarboxylative condensation of pimeloyl-[acyl-carrier protein] and L-alanine to produce 8-amino-7-oxononanoate (AON), [acyl-carrier protein], and carbon dioxide. This Halorhodospira halophila (strain DSM 244 / SL1) (Ectothiorhodospira halophila (strain DSM 244 / SL1)) protein is 8-amino-7-oxononanoate synthase.